The primary structure comprises 109 residues: MNFSSFIFKVSDVFKSVIHEASDVVTKADLDNANAHTHSLAVGLGIGIVLFLIAGLIIGYFISMKIMKRQLKKNPPISKDTIRMIYQQVGRKPSESQINEIYNRAVKQK.

Residues valine 42–isoleucine 62 form a helical membrane-spanning segment.

This sequence belongs to the UPF0154 family.

Its subcellular location is the cell membrane. The protein is UPF0154 protein UPA3_0273 of Ureaplasma parvum serovar 3 (strain ATCC 27815 / 27 / NCTC 11736).